A 710-amino-acid chain; its full sequence is Dynein axonemal assembly factor 3 homolog (710 aa).

The segment at 403–487 (GAEAGAGAGP…DSDPAAAAST (85 aa)) is disordered. The segment covering 404 to 416 (AEAGAGAGPGGEA) has biased composition (gly residues). The segment covering 417-438 (AAGASSSSGKEEAAAAAAAGKE) has biased composition (low complexity). The span at 453 to 462 (SGSGAPGAGT) shows a compositional bias: gly residues. Positions 478–487 (DSDPAAAAST) are enriched in low complexity.

The protein belongs to the DNAAF3 family.

Its subcellular location is the cytoplasm. In terms of biological role, required for the assembly of axonemal inner and outer dynein arms. Involved in preassembly of dyneins into complexes before their transport into cilia. This is Dynein axonemal assembly factor 3 homolog (DAB1) from Chlamydomonas reinhardtii (Chlamydomonas smithii).